Reading from the N-terminus, the 522-residue chain is Glucose-6-phosphate 1-dehydrogenase (522 aa).

NADP(+) is bound by residues 40 to 47 (GASGDLAK), Arg74, and Lys177. D-glucose 6-phosphate-binding positions include Lys177, 207–211 (HYLGK), Glu245, and Asp264. The Proton acceptor role is filled by His269. Arg364 is a binding site for NADP(+). Positions 367 and 372 each coordinate D-glucose 6-phosphate. Positions 373, 377, and 401 each coordinate NADP(+). Gln403 lines the D-glucose 6-phosphate pocket. NADP(+)-binding positions include 409 to 411 (YMK), 429 to 431 (DLT), Arg495, and Trp517.

The protein belongs to the glucose-6-phosphate dehydrogenase family.

The protein resides in the cytoplasm. It localises to the cytosol. It catalyses the reaction D-glucose 6-phosphate + NADP(+) = 6-phospho-D-glucono-1,5-lactone + NADPH + H(+). It participates in carbohydrate degradation; pentose phosphate pathway; D-ribulose 5-phosphate from D-glucose 6-phosphate (oxidative stage): step 1/3. Functionally, cytosolic glucose-6-phosphate dehydrogenase that catalyzes the first and rate-limiting step of the oxidative branch within the pentose phosphate pathway/shunt, an alternative route to glycolysis for the dissimilation of carbohydrates and a major source of reducing power and metabolic intermediates for fatty acid and nucleic acid biosynthetic processes. The chain is Glucose-6-phosphate 1-dehydrogenase (gspd-1) from Caenorhabditis elegans.